Consider the following 67-residue polypeptide: Large ribosomal subunit protein uL30 (67 aa).

The protein belongs to the universal ribosomal protein uL30 family. In terms of assembly, part of the 50S ribosomal subunit.

This Hamiltonella defensa subsp. Acyrthosiphon pisum (strain 5AT) protein is Large ribosomal subunit protein uL30.